A 213-amino-acid polypeptide reads, in one-letter code: Ribonuclease HII (213 aa).

An RNase H type-2 domain is found at 2-213 (GRVAGIDEAG…KEWATWKRLR (212 aa)). Aspartate 8, glutamate 9, and aspartate 113 together coordinate a divalent metal cation.

It belongs to the RNase HII family. Requires Mn(2+) as cofactor. Mg(2+) serves as cofactor.

The protein resides in the cytoplasm. The enzyme catalyses Endonucleolytic cleavage to 5'-phosphomonoester.. Functionally, endonuclease that specifically degrades the RNA of RNA-DNA hybrids. The chain is Ribonuclease HII from Thermofilum pendens (strain DSM 2475 / Hrk 5).